Consider the following 186-residue polypeptide: Agglutinin isolectin 3 (186 aa).

Position 1 is a pyrrolidone carboxylic acid (Q1). Chitin-binding type-1 domains follow at residues 1–42 (QRCG…ACWT), 43–85 (SKRC…PCRA), 86–128 (DIKC…ACST), and 129–171 (DKPC…GCDG). 16 disulfide bridges follow: C3–C18, C12–C24, C17–C31, C35–C40, C46–C61, C55–C67, C60–C74, C78–C83, C89–C104, C98–C110, C103–C117, C121–C126, C132–C147, C141–C153, C146–C160, and C164–C169. Residue 10 to 12 (MEC) participates in substrate binding. 62–73 (SQYGHCGFGAEY) is a substrate binding site. 114 to 115 (SE) is a substrate binding site. Residues 172-186 (VFAEAIATNSTLLAE) constitute a propeptide that is removed on maturation. N-linked (GlcNAc...) asparagine glycosylation is present at N180.

As to quaternary structure, homodimer, u-shaped.

In terms of biological role, N-acetyl-D-glucosamine / N-acetyl-D-neuraminic acid binding lectin. This Triticum aestivum (Wheat) protein is Agglutinin isolectin 3.